The following is a 531-amino-acid chain: Light-independent protochlorophyllide reductase subunit B (531 aa).

Residue Asp36 coordinates [4Fe-4S] cluster. Residue Asp291 is the Proton donor of the active site. 426–427 is a binding site for substrate; it reads GL.

This sequence belongs to the ChlB/BchB/BchZ family. In terms of assembly, protochlorophyllide reductase is composed of three subunits; ChlL, ChlN and ChlB. Forms a heterotetramer of two ChlB and two ChlN subunits. Requires [4Fe-4S] cluster as cofactor.

It catalyses the reaction chlorophyllide a + oxidized 2[4Fe-4S]-[ferredoxin] + 2 ADP + 2 phosphate = protochlorophyllide a + reduced 2[4Fe-4S]-[ferredoxin] + 2 ATP + 2 H2O. The protein operates within porphyrin-containing compound metabolism; chlorophyll biosynthesis (light-independent). Functionally, component of the dark-operative protochlorophyllide reductase (DPOR) that uses Mg-ATP and reduced ferredoxin to reduce ring D of protochlorophyllide (Pchlide) to form chlorophyllide a (Chlide). This reaction is light-independent. The NB-protein (ChlN-ChlB) is the catalytic component of the complex. The chain is Light-independent protochlorophyllide reductase subunit B from Prochlorococcus marinus (strain MIT 9211).